The sequence spans 397 residues: 2,6-dihydroxypyridine 3-monooxygenase (397 aa).

Residues 14–16 (SIS), 35–36 (ER), Val-49, Leu-120, Asp-306, and 316–320 (AAGGA) contribute to the FAD site.

In terms of assembly, homodimer. The cofactor is FAD.

The catalysed reaction is 2,6-dihydroxypyridine + NADH + O2 + H(+) = 2,3,6-trihydroxypyridine + NAD(+) + H2O. It functions in the pathway alkaloid degradation; nicotine degradation. Catalyzes the conversion of 2,6-dihydroxypyridine into 2,3,6-trihydroxypyridine in the nicotine degradation pathway. The sequence is that of 2,6-dihydroxypyridine 3-monooxygenase (dhpH) from Paenarthrobacter nicotinovorans (Arthrobacter nicotinovorans).